Consider the following 194-residue polypeptide: uncharacterized protein (194 aa).

Residues 1–20 (MLYKFTVLLLIYSYLRNLQA) form the signal peptide. Asparagine 31, asparagine 72, asparagine 133, and asparagine 157 each carry an N-linked (GlcNAc...) asparagine; by host glycan.

This is an uncharacterized protein from Ostreid herpesvirus 1 (isolate France) (OsHV-1).